The chain runs to 192 residues: Peptidyl-tRNA hydrolase (192 aa).

Tyrosine 17 contacts tRNA. Histidine 22 serves as the catalytic Proton acceptor. Residues phenylalanine 67, asparagine 69, and asparagine 115 each coordinate tRNA.

Belongs to the PTH family. As to quaternary structure, monomer.

The protein resides in the cytoplasm. The catalysed reaction is an N-acyl-L-alpha-aminoacyl-tRNA + H2O = an N-acyl-L-amino acid + a tRNA + H(+). Its function is as follows. Hydrolyzes ribosome-free peptidyl-tRNAs (with 1 or more amino acids incorporated), which drop off the ribosome during protein synthesis, or as a result of ribosome stalling. In terms of biological role, catalyzes the release of premature peptidyl moieties from peptidyl-tRNA molecules trapped in stalled 50S ribosomal subunits, and thus maintains levels of free tRNAs and 50S ribosomes. The chain is Peptidyl-tRNA hydrolase from Methylobacillus flagellatus (strain ATCC 51484 / DSM 6875 / VKM B-1610 / KT).